Reading from the N-terminus, the 155-residue chain is Arginine repressor (155 aa).

This sequence belongs to the ArgR family.

It is found in the cytoplasm. It functions in the pathway amino-acid biosynthesis; L-arginine biosynthesis [regulation]. In terms of biological role, regulates arginine biosynthesis genes. This Histophilus somni (strain 129Pt) (Haemophilus somnus) protein is Arginine repressor.